The primary structure comprises 179 residues: ATP synthase subunit delta (179 aa).

It belongs to the ATPase delta chain family. F-type ATPases have 2 components, F(1) - the catalytic core - and F(0) - the membrane proton channel. F(1) has five subunits: alpha(3), beta(3), gamma(1), delta(1), epsilon(1). F(0) has three main subunits: a(1), b(2) and c(10-14). The alpha and beta chains form an alternating ring which encloses part of the gamma chain. F(1) is attached to F(0) by a central stalk formed by the gamma and epsilon chains, while a peripheral stalk is formed by the delta and b chains.

It is found in the cell membrane. F(1)F(0) ATP synthase produces ATP from ADP in the presence of a proton or sodium gradient. F-type ATPases consist of two structural domains, F(1) containing the extramembraneous catalytic core and F(0) containing the membrane proton channel, linked together by a central stalk and a peripheral stalk. During catalysis, ATP synthesis in the catalytic domain of F(1) is coupled via a rotary mechanism of the central stalk subunits to proton translocation. Functionally, this protein is part of the stalk that links CF(0) to CF(1). It either transmits conformational changes from CF(0) to CF(1) or is implicated in proton conduction. The polypeptide is ATP synthase subunit delta (Staphylococcus epidermidis (strain ATCC 35984 / DSM 28319 / BCRC 17069 / CCUG 31568 / BM 3577 / RP62A)).